Here is a 268-residue protein sequence, read N- to C-terminus: Nuclear protein UL4 homolog (268 aa).

This sequence belongs to the alphaherpesvirinae HHV-1 UL4 family.

It localises to the host nucleus. This chain is Nuclear protein UL4 homolog (MDV016), found in Gallid herpesvirus 2 (strain Chicken/Md5/ATCC VR-987) (GaHV-2).